Here is a 311-residue protein sequence, read N- to C-terminus: Porphobilinogen deaminase (311 aa).

The residue at position 245 (C245) is an S-(dipyrrolylmethanemethyl)cysteine.

It belongs to the HMBS family. Monomer. Dipyrromethane is required as a cofactor.

The catalysed reaction is 4 porphobilinogen + H2O = hydroxymethylbilane + 4 NH4(+). Its pathway is porphyrin-containing compound metabolism; protoporphyrin-IX biosynthesis; coproporphyrinogen-III from 5-aminolevulinate: step 2/4. In terms of biological role, tetrapolymerization of the monopyrrole PBG into the hydroxymethylbilane pre-uroporphyrinogen in several discrete steps. The chain is Porphobilinogen deaminase from Deinococcus deserti (strain DSM 17065 / CIP 109153 / LMG 22923 / VCD115).